The sequence spans 2298 residues: Protein Ycf2 (2298 aa).

1640–1647 (GSIGTGRS) provides a ligand contact to ATP.

It belongs to the Ycf2 family.

Its subcellular location is the plastid. It is found in the chloroplast stroma. In terms of biological role, probable ATPase of unknown function. Its presence in a non-photosynthetic plant (Epifagus virginiana) and experiments in tobacco indicate that it has an essential function which is probably not related to photosynthesis. The protein is Protein Ycf2 of Carica papaya (Papaya).